Here is a 121-residue protein sequence, read N- to C-terminus: Two-component response regulator ORR13 (121 aa).

One can recognise a Response regulatory domain in the interval 5 to 121 (HVLVVDDTHV…ADVPRILNYI (117 aa)). Asp-55 carries the 4-aspartylphosphate modification.

This sequence belongs to the ARR family. Type-A subfamily. Two-component system major event consists of a His-to-Asp phosphorelay between a sensor histidine kinase (HK) and a response regulator (RR). In plants, the His-to-Asp phosphorelay involves an additional intermediate named Histidine-containing phosphotransfer protein (HPt). This multistep phosphorelay consists of a His-Asp-His-Asp sequential transfer of a phosphate group between first a His and an Asp of the HK protein, followed by the transfer to a conserved His of the HPt protein and finally the transfer to an Asp in the receiver domain of the RR protein. Expressed in flowers and panicles.

Its function is as follows. Functions as a response regulator involved in His-to-Asp phosphorelay signal transduction system. Phosphorylation of the Asp residue in the receiver domain activates the ability of the protein to promote the transcription of target genes. Type-A response regulators seem to act as negative regulators of the cytokinin signaling. The sequence is that of Two-component response regulator ORR13 from Oryza sativa subsp. japonica (Rice).